The following is a 1608-amino-acid chain: DNA-directed RNA polymerase III subunit rpc2 (1608 aa).

Positions 1557, 1560, 1569, and 1572 each coordinate Zn(2+). The C4-type zinc finger occupies 1557 to 1572 (CKNCGFLGYEGYCQYC).

It belongs to the RNA polymerase beta chain family. As to quaternary structure, component of the RNA polymerase III (Pol III) complex. This protein undergoes a protein self splicing that involves a post-translational excision of the intervening region (intein) followed by peptide ligation.

Its subcellular location is the nucleus. The catalysed reaction is RNA(n) + a ribonucleoside 5'-triphosphate = RNA(n+1) + diphosphate. Its function is as follows. DNA-dependent RNA polymerase catalyzes the transcription of DNA into RNA using the four ribonucleoside triphosphates as substrates. Second largest core component of RNA polymerase III which synthesizes small RNAs, such as 5S rRNA and tRNAs. Proposed to contribute to the polymerase catalytic activity and forms the polymerase active center together with the largest subunit. Pol III is composed of mobile elements and rpc2 is part of the core element with the central large cleft and probably a clamp element that moves to open and close the cleft. The chain is DNA-directed RNA polymerase III subunit rpc2 (polr3b) from Dictyostelium discoideum (Social amoeba).